The following is a 617-amino-acid chain: Prothrombin (617 aa).

An N-terminal signal peptide occupies residues 1–24; sequence MLHVRGLGLPGCLALAALASLVHS. A propeptide spanning residues 25 to 43 is cleaved from the precursor; it reads QHVFLAPQQALSLLQRVRR. The Gla domain maps to 44–90; it reads ANSGFLEELRKGNLERECVEEQCSYEEAFEALESPQDTDVFWAKYTV. A 4-carboxyglutamate mark is found at Glu-50, Glu-51, Glu-58, Glu-60, Glu-63, Glu-64, Glu-69, Glu-70, Glu-73, and Glu-76. A disulfide bond links Cys-61 and Cys-66. 10 disulfides stabilise this stretch: Cys-91/Cys-104, Cys-109/Cys-187, Cys-130/Cys-170, Cys-158/Cys-182, Cys-215/Cys-292, Cys-236/Cys-276, Cys-264/Cys-287, Cys-332/Cys-478, Cys-387/Cys-403, and Cys-532/Cys-546. Kringle domains are found at residues 109-187 and 215-292; these read CAMD…IPVC and CLLE…LNYC. N-linked (GlcNAc...) asparagine glycans are attached at residues Asn-120 and Asn-144. The Peptidase S1 domain occupies 360-614; sequence IVEGWDAEKG…LKRWMQKVID (255 aa). His-402 (charge relay system) is an active-site residue. Residue Asn-412 is glycosylated (N-linked (GlcNAc...) asparagine). Residue Asp-458 is the Charge relay system of the active site. The segment at 547–569 is high affinity receptor-binding region which is also known as the TP508 peptide; that stretch reads AGFKVNDTKRGDACEGDSGGPFV. Asn-552 carries an N-linked (GlcNAc...) asparagine glycan. Cys-560 and Cys-590 are oxidised to a cystine. Ser-564 functions as the Charge relay system in the catalytic mechanism.

This sequence belongs to the peptidase S1 family. Heterodimer (named alpha-thrombin) of a light and a heavy chain; disulfide-linked. Forms a heterodimer with SERPINA5. In plasma, interacts (via N-terminus) with alpha-1-microglobulin; this interaction does not prevent the activation of prothrombin to thrombin. In terms of processing, the gamma-carboxyglutamyl residues, which bind calcium ions, result from the carboxylation of glutamyl residues by a microsomal enzyme, the vitamin K-dependent carboxylase. The modified residues are necessary for the calcium-dependent interaction with a negatively charged phospholipid surface, which is essential for the conversion of prothrombin to thrombin. Post-translationally, in the penultimate step of the coagulation cascade, prothrombin is converted to thrombin by the prothrombinase complex composed of factor Xa (F10), cofactor Va (F5), and phospholipids. This activation requires factor Xa-catalyzed sequential cleavage at 2 sites, Arg-310 and Arg-359, along 2 possible pathways. In the first pathway, the first cleavage occurs at Arg-310, leading to the formation of the inactive intermediate prethrombin-2. This pathway preferentially occurs on platelets and in the absence of cofactor Va. In the second pathway, the first cleavage occurs at Arg-359, which separates protease domain into 2 chains that remain connected through a disulfide bond and generates the active intermediate meizothrombin. The presence of cofactor Va directs activation along the meizothrombin pathway and greatly accelerates the rate of cleavage at Arg-359, but has a smaller effect on the cleavage of meizothrombin at Arg-310. Meizothrombin accumulates as an intermediate when prothrombinase is assembled on the membrane of red blood cells.

The catalysed reaction is Selective cleavage of Arg-|-Gly bonds in fibrinogen to form fibrin and release fibrinopeptides A and B.. Its activity is regulated as follows. Activity is promoted in the presence of negatively charged surfaces, such as polyphosphate and dextran sulfate. Inhibited by SERPINA5. In terms of biological role, thrombin, which cleaves bonds after Arg and Lys, converts fibrinogen to fibrin and activates factors V, VII, VIII, XIII, and, in complex with thrombomodulin, protein C. Functions in blood homeostasis, inflammation and wound healing. Activates coagulation factor XI (F11); activation is promoted by the contact with negatively charged surfaces. Triggers the production of pro-inflammatory cytokines, such as MCP-1/CCL2 and IL8/CXCL8, in endothelial cells. In Rattus norvegicus (Rat), this protein is Prothrombin (F2).